The following is a 145-amino-acid chain: Ribonuclease VapC24 (145 aa).

Residues 4-123 (IDTNILLYAQ…RHHGVDEFAT (120 aa)) form the PINc domain. Mg(2+) contacts are provided by aspartate 5 and aspartate 106.

This sequence belongs to the PINc/VapC protein family. Mg(2+) serves as cofactor.

In terms of biological role, toxic component of a type II toxin-antitoxin (TA) system. An RNase. Its cognate antitoxin is VapB24. This Mycobacterium tuberculosis (strain CDC 1551 / Oshkosh) protein is Ribonuclease VapC24.